Here is a 462-residue protein sequence, read N- to C-terminus: Integrator complex subunit 12 (462 aa).

Residues 42-132 (GIDSSYRPSQ…PETQSSPITV (91 aa)) are disordered. A compositionally biased stretch (polar residues) spans 59–86 (ISSTKNISIKQEPKISSSLPSGNNNGKV). A Glycyl lysine isopeptide (Lys-Gly) (interchain with G-Cter in SUMO2) cross-link involves residue lysine 68. Residues 88 to 124 (TTEKVKKEAEKRPADKMKSDITEGVDIPKKPRLEKPE) show a composition bias toward basic and acidic residues. The residue at position 128 (serine 128) is a Phosphoserine. A PHD-type zinc finger spans residues 159–215 (GLACVVCRQMMVASGNQLVECQECHNLYHRDCHKPQVTDKEANDPRLVWYCARCTRQ). Lysine 254 participates in a covalent cross-link: Glycyl lysine isopeptide (Lys-Gly) (interchain with G-Cter in SUMO2). The span at 301–328 (SSAGPSTAKLSSTTQNNTGKPATSSANQ) shows a compositional bias: polar residues. Positions 301–462 (SSAGPSTAKL…KKAAQKKLKK (162 aa)) are disordered. Composition is skewed to low complexity over residues 347 to 358 (KIGSNNSTTPTV) and 382 to 437 (VSKV…GPTS). The span at 449–462 (QMVKKKAAQKKLKK) shows a compositional bias: basic residues.

The protein belongs to the Integrator subunit 12 family. As to quaternary structure, component of the Integrator complex, composed of core subunits INTS1, INTS2, INTS3, INTS4, INTS5, INTS6, INTS7, INTS8, INTS9/RC74, INTS10, INTS11/CPSF3L, INTS12, INTS13, INTS14 and INTS15. The core complex associates with protein phosphatase 2A subunits PPP2CA and PPP2R1A, to form the Integrator-PP2A (INTAC) complex. Post-translationally, dephosphorylated at Ser-128 by the PNUTS-PP1 complex, promoting RNA polymerase II transcription pause-release.

The protein resides in the nucleus. In terms of biological role, component of the integrator complex, a multiprotein complex that terminates RNA polymerase II (Pol II) transcription in the promoter-proximal region of genes. The integrator complex provides a quality checkpoint during transcription elongation by driving premature transcription termination of transcripts that are unfavorably configured for transcriptional elongation: the complex terminates transcription by (1) catalyzing dephosphorylation of the C-terminal domain (CTD) of Pol II subunit POLR2A/RPB1 and SUPT5H/SPT5, (2) degrading the exiting nascent RNA transcript via endonuclease activity and (3) promoting the release of Pol II from bound DNA. The integrator complex is also involved in terminating the synthesis of non-coding Pol II transcripts, such as enhancer RNAs (eRNAs), small nuclear RNAs (snRNAs), telomerase RNAs and long non-coding RNAs (lncRNAs). Mediates recruitment of cytoplasmic dynein to the nuclear envelope, probably as component of the integrator complex. The protein is Integrator complex subunit 12 of Homo sapiens (Human).